Here is a 318-residue protein sequence, read N- to C-terminus: ADP-L-glycero-D-manno-heptose-6-epimerase (318 aa).

NADP(+)-binding positions include 10–11 (FI), 31–32 (DN), lysine 38, lysine 53, 76–80 (QGACS), and asparagine 93. The active-site Proton acceptor is tyrosine 141. Lysine 145 lines the NADP(+) pocket. Residue asparagine 172 coordinates substrate. 2 residues coordinate NADP(+): valine 173 and lysine 181. Lysine 181 acts as the Proton acceptor in catalysis. Substrate is bound by residues arginine 183, histidine 190, 204–207 (FEGS), arginine 212, and tyrosine 276.

This sequence belongs to the NAD(P)-dependent epimerase/dehydratase family. HldD subfamily. Homopentamer. NADP(+) serves as cofactor.

It carries out the reaction ADP-D-glycero-beta-D-manno-heptose = ADP-L-glycero-beta-D-manno-heptose. It functions in the pathway nucleotide-sugar biosynthesis; ADP-L-glycero-beta-D-manno-heptose biosynthesis; ADP-L-glycero-beta-D-manno-heptose from D-glycero-beta-D-manno-heptose 7-phosphate: step 4/4. In terms of biological role, catalyzes the interconversion between ADP-D-glycero-beta-D-manno-heptose and ADP-L-glycero-beta-D-manno-heptose via an epimerization at carbon 6 of the heptose. The sequence is that of ADP-L-glycero-D-manno-heptose-6-epimerase from Brachyspira hyodysenteriae (strain ATCC 49526 / WA1).